A 126-amino-acid polypeptide reads, in one-letter code: Large ribosomal subunit protein uL22 (126 aa).

The protein belongs to the universal ribosomal protein uL22 family. In terms of assembly, part of the 50S ribosomal subunit.

In terms of biological role, this protein binds specifically to 23S rRNA; its binding is stimulated by other ribosomal proteins, e.g. L4, L17, and L20. It is important during the early stages of 50S assembly. It makes multiple contacts with different domains of the 23S rRNA in the assembled 50S subunit and ribosome. The globular domain of the protein is located near the polypeptide exit tunnel on the outside of the subunit, while an extended beta-hairpin is found that lines the wall of the exit tunnel in the center of the 70S ribosome. This chain is Large ribosomal subunit protein uL22, found in Maricaulis maris (strain MCS10) (Caulobacter maris).